A 511-amino-acid chain; its full sequence is Sodium/hydrogen exchanger 9B1 (511 aa).

Residues Met-1–His-10 show a composition bias toward basic and acidic residues. Positions Met-1–Ser-41 are disordered. The span at Phe-16–Thr-31 shows a compositional bias: polar residues. The next 13 helical transmembrane spans lie at Ile-67 to Ser-87, Leu-95 to Ile-115, Arg-116 to Ile-136, Trp-152 to Leu-172, Leu-187 to Met-207, Phe-215 to Val-235, Val-260 to Val-280, Ile-284 to Val-304, Ile-337 to Lys-357, Ile-368 to Val-388, Ile-398 to Ile-418, Ile-431 to Val-451, and Val-472 to Gly-492.

Belongs to the monovalent cation:proton antiporter 1 (CPA1) transporter (TC 2.A.36) family.

The protein localises to the cell projection. It localises to the cilium. It is found in the flagellum membrane. In terms of biological role, sperm-specific Na(+)/H(+) exchanger involved in intracellular pH regulation of spermatozoa. Involved in sperm motility and fertility. The chain is Sodium/hydrogen exchanger 9B1 (SLC9B1) from Macaca fascicularis (Crab-eating macaque).